Reading from the N-terminus, the 401-residue chain is 4-hydroxy-3-methylbut-2-en-1-yl diphosphate synthase (ferredoxin) (401 aa).

The [4Fe-4S] cluster site is built by cysteine 306, cysteine 309, cysteine 340, and glutamate 347.

This sequence belongs to the IspG family. Requires [4Fe-4S] cluster as cofactor.

The enzyme catalyses (2E)-4-hydroxy-3-methylbut-2-enyl diphosphate + 2 oxidized [2Fe-2S]-[ferredoxin] + H2O = 2-C-methyl-D-erythritol 2,4-cyclic diphosphate + 2 reduced [2Fe-2S]-[ferredoxin] + H(+). The protein operates within isoprenoid biosynthesis; isopentenyl diphosphate biosynthesis via DXP pathway; isopentenyl diphosphate from 1-deoxy-D-xylulose 5-phosphate: step 5/6. In terms of biological role, converts 2C-methyl-D-erythritol 2,4-cyclodiphosphate (ME-2,4cPP) into 1-hydroxy-2-methyl-2-(E)-butenyl 4-diphosphate. The sequence is that of 4-hydroxy-3-methylbut-2-en-1-yl diphosphate synthase (ferredoxin) from Synechococcus sp. (strain CC9902).